The sequence spans 1026 residues: MLGTRVTRAVYTRAPLKLQLRALGLHRRYVHNGSKNDEGSSTSTTTNKEENDKKLPDVYPQMLALPISRRPLFPGFYKAVVISEPRVMKAITDMVERQQPYIGAFMLKDSNNDTDIIHDISEVHELGVLAQVTSAFPSKDEKTGKETMTALLYPHKRIKIDQLIPPKDVKIEDIVVEKVVDNEVASEETKDEETVDKTESATDKVSEEITEEIAKAPSTEVTEDPDNYENPTDFLKDYNVTLVNVSNLEDEPFDIKSPIINALTSEILKVFKEISQLNSMFREQIATFSASIQSATTNIFEEPAKLADFAAAVSAGEEEELQEVLESLNIEQRLEKSLLVLKKELMNAELQNKISKDVETKIQKRQKEYYLMEQLKGIKRELGIDDGRDKLVDTYKKRVEKLNLPENVQKTFDEEITKLATLETSMSEFGVIRNYLDWLTSLPWGINSKEQYSIPRARKILDEDHYGMKDVKDRILEFIAVGKLLGKVDGKIICFVGPPGVGKTSIGKSISRALNRQFFRFSVGGMTDVAEIKGHRRTYIGALPGRIIQALKKCQTQNPLILIDEIDKIGHGGIHGDPSAALLEVLDPEQNNSFLDNYLDIPIDLSKVLFVCTANSLDTIPRPLLDRMEVIELTGYVAEDKIKIAEQYLVPSAKKTAGLQNATVSMDEEAINALMKYYCRESGVRNLKKHIEKIYRKAALEVVKKMSIEDTEPLVSTSEEPQLSQTNQNISSSSAEDSTTDLEDSVNPDTAKEASKPNNSQEGASVEETKKAVKTEEEEDTSMIVPEDIKVEITPEDLKKYVGPPIYTTDRLYETTPPGVIMGLAWTNMGGCSLYVESVLEQPLHNCKHANLERTGQLGDVMKESSRLAYSFSKMYLSKKFPENRFFEKAAIHLHCPEGATPKDGPSAGVTMATSFLSLALNKPVDPTVAMTGELTLTGKVLRIGGLREKVVAAKRSGAKTVIFPKDNLNDWEELPENVKEGMEPLAADWYDDIYKRLFSGVKKSEGNNVWKSEFELIDKKKKEND.

Residues M1 to Y29 constitute a mitochondrion transit peptide. Disordered stretches follow at residues Y29–L55 and A185–S206. The region spanning M62–L345 is the Lon N-terminal domain. Residues A185–T194 are compositionally biased toward acidic residues. The segment covering V195–S206 has biased composition (basic and acidic residues). G497 to T504 serves as a coordination point for ATP. Residues T711–V785 form a disordered region. Positions L714–D737 are enriched in polar residues. One can recognise a Lon proteolytic domain in the interval T815 to G1001. Active-site residues include S907 and K950.

The protein belongs to the peptidase S16 family. In terms of assembly, homohexamer or homoheptamer. Organized in a ring with a central cavity.

It localises to the mitochondrion matrix. It carries out the reaction Hydrolysis of proteins in presence of ATP.. ATP-dependent serine protease that mediates the selective degradation of misfolded, unassembled or oxidatively damaged polypeptides as well as certain short-lived regulatory proteins in the mitochondrial matrix. May also have a chaperone function in the assembly of inner membrane protein complexes. Participates in the regulation of mitochondrial gene expression and in the maintenance of the integrity of the mitochondrial genome. Binds to mitochondrial DNA in a site-specific manner. The protein is Lon protease homolog, mitochondrial of Candida glabrata (strain ATCC 2001 / BCRC 20586 / JCM 3761 / NBRC 0622 / NRRL Y-65 / CBS 138) (Yeast).